The chain runs to 481 residues: F-box protein At1g49360 (481 aa).

The 52-residue stretch at 105–156 folds into the F-box domain; the sequence is LKEDLFLPSDLVRLILSRLSFKDNIRSSTVCKAWGDIAASVRVKSRRCWLLY.

This chain is F-box protein At1g49360, found in Arabidopsis thaliana (Mouse-ear cress).